Consider the following 209-residue polypeptide: Uracil phosphoribosyltransferase (209 aa).

Residues arginine 79, arginine 104, and 131 to 139 (DPMLATGGS) contribute to the 5-phospho-alpha-D-ribose 1-diphosphate site. Uracil-binding positions include isoleucine 194 and 199 to 201 (GDA). Aspartate 200 is a binding site for 5-phospho-alpha-D-ribose 1-diphosphate.

It belongs to the UPRTase family. Requires Mg(2+) as cofactor.

The enzyme catalyses UMP + diphosphate = 5-phospho-alpha-D-ribose 1-diphosphate + uracil. The protein operates within pyrimidine metabolism; UMP biosynthesis via salvage pathway; UMP from uracil: step 1/1. Its activity is regulated as follows. Allosterically activated by GTP. Catalyzes the conversion of uracil and 5-phospho-alpha-D-ribose 1-diphosphate (PRPP) to UMP and diphosphate. This is Uracil phosphoribosyltransferase from Clostridium perfringens (strain SM101 / Type A).